Here is a 319-residue protein sequence, read N- to C-terminus: Formimidoylglutamase (319 aa).

Positions 127, 150, 152, 154, 242, and 244 each coordinate Mn(2+).

Belongs to the arginase family. The cofactor is Mn(2+).

It carries out the reaction N-formimidoyl-L-glutamate + H2O = formamide + L-glutamate. The protein operates within amino-acid degradation; L-histidine degradation into L-glutamate; L-glutamate from N-formimidoyl-L-glutamate (hydrolase route): step 1/1. Its function is as follows. Catalyzes the conversion of N-formimidoyl-L-glutamate to L-glutamate and formamide. This is Formimidoylglutamase from Halalkalibacterium halodurans (strain ATCC BAA-125 / DSM 18197 / FERM 7344 / JCM 9153 / C-125) (Bacillus halodurans).